The primary structure comprises 521 residues: 2-isopropylmalate synthase (521 aa).

The 263-residue stretch at 12–274 (VIIFDTTLRD…WNKIDTTMLT (263 aa)) folds into the Pyruvate carboxyltransferase domain. 4 residues coordinate Mn(2+): D21, H209, H211, and N245. Residues 398-521 (KLLSLTVIAG…DLPVPEAAAS (124 aa)) are regulatory domain.

The protein belongs to the alpha-IPM synthase/homocitrate synthase family. LeuA type 1 subfamily. As to quaternary structure, homodimer. It depends on Mn(2+) as a cofactor.

The protein resides in the cytoplasm. The enzyme catalyses 3-methyl-2-oxobutanoate + acetyl-CoA + H2O = (2S)-2-isopropylmalate + CoA + H(+). It functions in the pathway amino-acid biosynthesis; L-leucine biosynthesis; L-leucine from 3-methyl-2-oxobutanoate: step 1/4. Catalyzes the condensation of the acetyl group of acetyl-CoA with 3-methyl-2-oxobutanoate (2-ketoisovalerate) to form 3-carboxy-3-hydroxy-4-methylpentanoate (2-isopropylmalate). The polypeptide is 2-isopropylmalate synthase (Rhodopseudomonas palustris (strain BisB18)).